Consider the following 100-residue polypeptide: Small ribosomal subunit protein uS14 (100 aa).

Belongs to the universal ribosomal protein uS14 family. As to quaternary structure, part of the 30S ribosomal subunit. Contacts proteins S3 and S10.

Binds 16S rRNA, required for the assembly of 30S particles and may also be responsible for determining the conformation of the 16S rRNA at the A site. In Synechococcus sp. (strain CC9902), this protein is Small ribosomal subunit protein uS14.